We begin with the raw amino-acid sequence, 146 residues long: Large ribosomal subunit protein bL17 (146 aa).

The span at 124-134 shows a compositional bias: low complexity; that stretch reads EASRATRAAAS. Residues 124-146 are disordered; the sequence is EASRATRAAASKKAEEEAASEAE.

Belongs to the bacterial ribosomal protein bL17 family. As to quaternary structure, part of the 50S ribosomal subunit. Contacts protein L32.

This chain is Large ribosomal subunit protein bL17, found in Corynebacterium kroppenstedtii (strain DSM 44385 / JCM 11950 / CIP 105744 / CCUG 35717).